The primary structure comprises 218 residues: Pyridoxine/pyridoxamine 5'-phosphate oxidase (218 aa).

Substrate is bound by residues 14–17 (RREY) and Lys72. Residues 67–72 (RIVLLK), 82–83 (YT), Arg88, Lys89, and Gln111 each bind FMN. Positions 129, 133, and 137 each coordinate substrate. FMN-binding positions include 146-147 (QS) and Trp191. 197-199 (RLH) serves as a coordination point for substrate. FMN is bound at residue Arg201.

The protein belongs to the pyridoxamine 5'-phosphate oxidase family. Homodimer. It depends on FMN as a cofactor.

The catalysed reaction is pyridoxamine 5'-phosphate + O2 + H2O = pyridoxal 5'-phosphate + H2O2 + NH4(+). It carries out the reaction pyridoxine 5'-phosphate + O2 = pyridoxal 5'-phosphate + H2O2. The protein operates within cofactor metabolism; pyridoxal 5'-phosphate salvage; pyridoxal 5'-phosphate from pyridoxamine 5'-phosphate: step 1/1. It functions in the pathway cofactor metabolism; pyridoxal 5'-phosphate salvage; pyridoxal 5'-phosphate from pyridoxine 5'-phosphate: step 1/1. In terms of biological role, catalyzes the oxidation of either pyridoxine 5'-phosphate (PNP) or pyridoxamine 5'-phosphate (PMP) into pyridoxal 5'-phosphate (PLP). This chain is Pyridoxine/pyridoxamine 5'-phosphate oxidase, found in Cronobacter sakazakii (strain ATCC BAA-894) (Enterobacter sakazakii).